The primary structure comprises 74 residues: Ribosome modulation factor (74 aa).

This sequence belongs to the ribosome modulation factor family.

The protein localises to the cytoplasm. Its function is as follows. During stationary phase, converts 70S ribosomes to an inactive dimeric form (100S ribosomes). This chain is Ribosome modulation factor, found in Cellvibrio japonicus (strain Ueda107) (Pseudomonas fluorescens subsp. cellulosa).